Consider the following 720-residue polypeptide: Serine/threonine-protein kinase KIN82 (720 aa).

2 stretches are compositionally biased toward polar residues: residues 1 to 13 (MTQQ…SQRL) and 99 to 116 (FNHN…STSE). Disordered regions lie at residues 1–20 (MTQQ…RSMS) and 99–128 (FNHN…RSTI). At Ser203 the chain carries Phosphoserine. A compositionally biased stretch (low complexity) spans 230-241 (SPLANLSLSNSP). The interval 230–257 (SPLANLSLSNSPIDSPRKNSETRKDQIP) is disordered. A compositionally biased stretch (basic and acidic residues) spans 244-255 (SPRKNSETRKDQ). Residues 324 to 602 (FEKIRLLGQG…AADIKRHPFF (279 aa)) enclose the Protein kinase domain. ATP contacts are provided by residues 330-338 (LGQGDVGKV) and Lys353. Asp449 acts as the Proton acceptor in catalysis.

It belongs to the protein kinase superfamily. Ser/Thr protein kinase family. KIN82 subfamily.

It catalyses the reaction L-seryl-[protein] + ATP = O-phospho-L-seryl-[protein] + ADP + H(+). It carries out the reaction L-threonyl-[protein] + ATP = O-phospho-L-threonyl-[protein] + ADP + H(+). Flippase activator that phosphorylates DFN1 and DFN2 and which is involved in the generation of phospholipid asymmetry in membranes by the inward translocation of phospholipids. The chain is Serine/threonine-protein kinase KIN82 (KIN82) from Saccharomyces cerevisiae (strain ATCC 204508 / S288c) (Baker's yeast).